Reading from the N-terminus, the 547-residue chain is Glucose-6-phosphate isomerase (547 aa).

Glutamate 356 serves as the catalytic Proton donor. Catalysis depends on residues histidine 387 and lysine 508.

It belongs to the GPI family.

Its subcellular location is the cytoplasm. It carries out the reaction alpha-D-glucose 6-phosphate = beta-D-fructose 6-phosphate. The protein operates within carbohydrate biosynthesis; gluconeogenesis. Its pathway is carbohydrate degradation; glycolysis; D-glyceraldehyde 3-phosphate and glycerone phosphate from D-glucose: step 2/4. In terms of biological role, catalyzes the reversible isomerization of glucose-6-phosphate to fructose-6-phosphate. This Cupriavidus taiwanensis (strain DSM 17343 / BCRC 17206 / CCUG 44338 / CIP 107171 / LMG 19424 / R1) (Ralstonia taiwanensis (strain LMG 19424)) protein is Glucose-6-phosphate isomerase.